The primary structure comprises 251 residues: uncharacterized protein (251 aa).

This sequence belongs to the methyltransferase superfamily.

The protein resides in the cytoplasm. Its subcellular location is the nucleus. In terms of biological role, probable methyltransferase. This is an uncharacterized protein from Schizosaccharomyces pombe (strain 972 / ATCC 24843) (Fission yeast).